Consider the following 351-residue polypeptide: Replication protein RepA (351 aa).

The interval 295 to 315 (ALPPTKAAPEEPEDILPGDDQ) is disordered. Positions 304–315 (EEPEDILPGDDQ) are enriched in acidic residues.

The protein belongs to the initiator RepB protein family.

Its function is as follows. This protein is essential for plasmid replication; it is involved in copy control functions. The chain is Replication protein RepA (repA) from Salmonella typhi.